The primary structure comprises 282 residues: tRNA pseudouridine synthase B (282 aa).

Residue D36 is the Nucleophile of the active site.

Belongs to the pseudouridine synthase TruB family. Type 1 subfamily.

The enzyme catalyses uridine(55) in tRNA = pseudouridine(55) in tRNA. Its function is as follows. Responsible for synthesis of pseudouridine from uracil-55 in the psi GC loop of transfer RNAs. The polypeptide is tRNA pseudouridine synthase B (Mycoplasmopsis pulmonis (strain UAB CTIP) (Mycoplasma pulmonis)).